The chain runs to 875 residues: Neurotrypsin (875 aa).

The N-terminal stretch at 1 to 20 is a signal peptide; sequence MTLARFVLALVLGALPEVVG. The N-linked (GlcNAc...) asparagine glycan is linked to asparagine 26. The segment at 30 to 87 is disordered; the sequence is HHRHRHSPPPGPQYPYYLPTHQRPPRTRPPPPLPRFPRPPRALPAQRPHALQAGHTPR. Positions 56-71 are enriched in pro residues; that stretch reads TRPPPPLPRFPRPPRA. Residues 93 to 165 form the Kringle domain; sequence CPAGELWVSV…GKVDWGYCDC (73 aa). Intrachain disulfides connect cysteine 93–cysteine 165, cysteine 109–cysteine 149, cysteine 138–cysteine 163, cysteine 195–cysteine 259, cysteine 208–cysteine 269, cysteine 239–cysteine 249, cysteine 305–cysteine 369, cysteine 318–cysteine 379, cysteine 349–cysteine 359, cysteine 412–cysteine 475, cysteine 425–cysteine 485, cysteine 455–cysteine 465, cysteine 525–cysteine 589, cysteine 538–cysteine 599, cysteine 569–cysteine 579, cysteine 619–cysteine 750, cysteine 661–cysteine 677, cysteine 765–cysteine 831, cysteine 794–cysteine 808, and cysteine 821–cysteine 850. 4 SRCR domains span residues 170–271, 280–381, 387–487, and 500–601; these read VRLR…TCSF, IRLV…SCTP, IRLA…ACYP, and VRLM…ICDY. Residues 619–630 are zymogen activation region; sequence CGLRLLHRRQKR. The Peptidase S1 domain occupies 631-874; sequence IIGGKNSLRG…FVPWIKSVTK (244 aa). The active-site Charge relay system is the histidine 676. Residue asparagine 683 is glycosylated (N-linked (GlcNAc...) asparagine). Aspartate 726 acts as the Charge relay system in catalysis. Serine 825 acts as the Charge relay system in catalysis.

This sequence belongs to the peptidase S1 family.

It localises to the secreted. Functionally, plays a role in neuronal plasticity and the proteolytic action may subserve structural reorganizations associated with learning and memory operations. This Macaca mulatta (Rhesus macaque) protein is Neurotrypsin (PRSS12).